A 335-amino-acid polypeptide reads, in one-letter code: Histidinol-phosphate aminotransferase (335 aa).

Lys-202 is modified (N6-(pyridoxal phosphate)lysine).

Belongs to the class-II pyridoxal-phosphate-dependent aminotransferase family. Histidinol-phosphate aminotransferase subfamily. Homodimer. Pyridoxal 5'-phosphate is required as a cofactor.

The enzyme catalyses L-histidinol phosphate + 2-oxoglutarate = 3-(imidazol-4-yl)-2-oxopropyl phosphate + L-glutamate. It participates in amino-acid biosynthesis; L-histidine biosynthesis; L-histidine from 5-phospho-alpha-D-ribose 1-diphosphate: step 7/9. The chain is Histidinol-phosphate aminotransferase from Thermotoga maritima (strain ATCC 43589 / DSM 3109 / JCM 10099 / NBRC 100826 / MSB8).